Consider the following 1433-residue polypeptide: DNA-directed RNA polymerase subunit beta' (1433 aa).

4 residues coordinate Zn(2+): Cys-66, Cys-68, Cys-81, and Cys-84. Asp-473, Asp-475, and Asp-477 together coordinate Mg(2+). Zn(2+)-binding residues include Cys-815, Cys-889, Cys-896, and Cys-899.

It belongs to the RNA polymerase beta' chain family. In terms of assembly, the RNAP catalytic core consists of 2 alpha, 1 beta, 1 beta' and 1 omega subunit. When a sigma factor is associated with the core the holoenzyme is formed, which can initiate transcription. The cofactor is Mg(2+). It depends on Zn(2+) as a cofactor.

The catalysed reaction is RNA(n) + a ribonucleoside 5'-triphosphate = RNA(n+1) + diphosphate. Its function is as follows. DNA-dependent RNA polymerase catalyzes the transcription of DNA into RNA using the four ribonucleoside triphosphates as substrates. The polypeptide is DNA-directed RNA polymerase subunit beta' (Porphyromonas gingivalis (strain ATCC 33277 / DSM 20709 / CIP 103683 / JCM 12257 / NCTC 11834 / 2561)).